A 256-amino-acid chain; its full sequence is uncharacterized protein (256 aa).

NADP(+) contacts are provided by isoleucine 18, serine 37, lysine 46, aspartate 66, tyrosine 164, lysine 168, valine 197, and threonine 199. The Proton donor role is filled by tyrosine 164. The active-site Lowers pKa of active site Tyr is the lysine 168.

It belongs to the short-chain dehydrogenases/reductases (SDR) family.

It is found in the cytoplasm. This is an uncharacterized protein from Saccharomyces cerevisiae (strain ATCC 204508 / S288c) (Baker's yeast).